The following is an 86-amino-acid chain: uncharacterized protein (86 aa).

The next 2 helical transmembrane spans lie at 21–43 (VFWVGLVVYYGFVALCWIGEATA) and 53–75 (FWYASFLGTFLIPLFMSIIYFYF).

Its subcellular location is the cell membrane. This is an uncharacterized protein from Archaeoglobus fulgidus (strain ATCC 49558 / DSM 4304 / JCM 9628 / NBRC 100126 / VC-16).